The primary structure comprises 602 residues: Putative ankyrin repeat protein L100 (602 aa).

11 ANK repeats span residues 133-162 (VLFY…SLIS), 269-294 (YLEK…KKSI), 295-324 (NKER…NINL), 325-354 (LKGT…DIHI), 355-384 (RDNA…DIHT), 386-414 (SSQA…DIRS), 416-444 (ENIL…DVLS), 445-474 (KGVE…DICA), 476-504 (DNEA…DVKA), 506-534 (DNEA…DITA), and 536-566 (NNEA…DVHA).

This is Putative ankyrin repeat protein L100 from Acanthamoeba polyphaga mimivirus (APMV).